Reading from the N-terminus, the 410-residue chain is Lipoyl synthase, mitochondrial (410 aa).

A mitochondrion-targeting transit peptide spans 1-29 (MASTTVCSAARIRVASSQVLRSIANTRTY). Positions 29–39 (YATTSPESSIP) are enriched in polar residues. Residues 29 to 49 (YATTSPESSIPETKPTAKRTP) form a disordered region. Residues Cys-129, Cys-134, Cys-140, Cys-160, Cys-164, Cys-167, and Ser-375 each contribute to the [4Fe-4S] cluster site. A Radical SAM core domain is found at 143 to 364 (GGSKAAATAT…KEKAMEMGFL (222 aa)).

The protein belongs to the radical SAM superfamily. Lipoyl synthase family. [4Fe-4S] cluster serves as cofactor.

It is found in the mitochondrion. It catalyses the reaction [[Fe-S] cluster scaffold protein carrying a second [4Fe-4S](2+) cluster] + N(6)-octanoyl-L-lysyl-[protein] + 2 oxidized [2Fe-2S]-[ferredoxin] + 2 S-adenosyl-L-methionine + 4 H(+) = [[Fe-S] cluster scaffold protein] + N(6)-[(R)-dihydrolipoyl]-L-lysyl-[protein] + 4 Fe(3+) + 2 hydrogen sulfide + 2 5'-deoxyadenosine + 2 L-methionine + 2 reduced [2Fe-2S]-[ferredoxin]. Its pathway is protein modification; protein lipoylation via endogenous pathway; protein N(6)-(lipoyl)lysine from octanoyl-[acyl-carrier-protein]: step 2/2. Functionally, catalyzes the radical-mediated insertion of two sulfur atoms into the C-6 and C-8 positions of the octanoyl moiety bound to the lipoyl domains of lipoate-dependent enzymes, thereby converting the octanoylated domains into lipoylated derivatives. The chain is Lipoyl synthase, mitochondrial from Arthroderma otae (strain ATCC MYA-4605 / CBS 113480) (Microsporum canis).